The primary structure comprises 127 residues: UPF0102 protein Paes_0016 (127 aa).

Belongs to the UPF0102 family.

This chain is UPF0102 protein Paes_0016, found in Prosthecochloris aestuarii (strain DSM 271 / SK 413).